A 466-amino-acid chain; its full sequence is MTQAAAPQPWSDRFETALHPAIVVFNASIGFDLALIEYDLTGSQAHAQMLAEQDIISREEGEAIVAGLEQIRSEYRTGQFQPGLDAEDVHFAVERRLTELLGDVGKKLHTARSRNDQVGTDTRLYLRDRVDHIRQQLRDYQRVLLSQAEQHLETLIPGYTHLQRAQPLSLAHHLHAYLEMAERDWERLGDLRKRLNTSPLGAGALAGTTFPIDRQRTAALLGFERIYANSLDAVSDRDSLVEFLAAASLIMVHLSRLAEEVILWASEEFRFVRLSDRCATGSSITPQKKNPDVPELVRGKTGRVFGHLQALLVVLKGLPLAYNKDLQEDKEGLFDAVQTVESCLEAMTILFAEGLSFQPDRLAAAVEADFSNATDVADYLAARGVPFREAYNLVGRVVRTCLEQGKLLKDLSLAEWQALHPQFEADIYTAIAPQQVVAARNSLGGTGFEQVRSALASVRQRLEATC.

The protein belongs to the lyase 1 family. Argininosuccinate lyase subfamily.

The protein localises to the cytoplasm. The catalysed reaction is 2-(N(omega)-L-arginino)succinate = fumarate + L-arginine. The protein operates within amino-acid biosynthesis; L-arginine biosynthesis; L-arginine from L-ornithine and carbamoyl phosphate: step 3/3. The chain is Argininosuccinate lyase from Synechococcus sp. (strain ATCC 27144 / PCC 6301 / SAUG 1402/1) (Anacystis nidulans).